A 193-amino-acid chain; its full sequence is Protein hunchback (193 aa).

The span at 18–31 shows a compositional bias: basic residues; sequence HLHHHHAHHSHHRH. 2 disordered regions span residues 18–57 and 153–193; these read HLHH…SNTN and LTPP…KYMA. Residues 34-44 show a composition bias toward low complexity; sequence NSNSNASSPHQ. Over residues 174–193 the composition is skewed to basic and acidic residues; that stretch reads EPEKEHDLMSNSSEDMKYMA.

It belongs to the hunchback C2H2-type zinc-finger protein family.

The protein resides in the nucleus. Functionally, gap class segmentation protein that controls development of head structures. This chain is Protein hunchback (hb), found in Drosophila petalopeza (Fruit fly).